The chain runs to 420 residues: Lactosylceramide alpha-2,3-sialyltransferase (420 aa).

Residues 1–39 (MRKKAAGGAERRPLKPRTEAAAAAPAGRAMPSDHSRMKL) are disordered. Residues 1 to 67 (MRKKAAGGAE…MRRPNLLLKD (67 aa)) are Cytoplasmic-facing. The span at 9-18 (AERRPLKPRT) shows a compositional bias: basic and acidic residues. A compositionally biased stretch (low complexity) spans 20-29 (AAAAAPAGRA). The chain crosses the membrane as a helical span at residues 68-88 (ILKCTLLLFGVWILFYILKLN). Topologically, residues 89 to 420 (HTTEECDMKR…DLSGGIHSEF (332 aa)) are lumenal. Cysteine 197 and cysteine 355 are disulfide-bonded. Residue asparagine 238 is glycosylated (N-linked (GlcNAc...) asparagine).

The protein belongs to the glycosyltransferase 29 family.

It localises to the golgi apparatus membrane. The enzyme catalyses a beta-D-Gal-(1-&gt;4)-beta-D-Glc-(1&lt;-&gt;1)-Cer(d18:1(4E)) + CMP-N-acetyl-beta-neuraminate = a ganglioside GM3 (d18:1(4E)) + CMP + H(+). It catalyses the reaction ganglioside GA2 (d18:1(4E)/18:0) + CMP-N-acetyl-beta-neuraminate = ganglioside GM2 (d18:1(4E)/18:0) + CMP + H(+). It carries out the reaction a beta-D-Gal-(1&lt;-&gt;1')-ceramide + CMP-N-acetyl-beta-neuraminate = N-acetyl-alpha-neuraminosyl-(2-&gt;3)-beta-D-galactosyl-(1&lt;-&gt;1')-ceramide + CMP + H(+). The catalysed reaction is ganglioside GA1 (d18:1(4E)/18:0) + CMP-N-acetyl-beta-neuraminate = ganglioside GM1 (d18:1(4E)/18:0) + CMP + H(+). In terms of biological role, transfers the sialyl group (N-acetyl-alpha-neuraminyl or NeuAc) from CMP-NeuAc to the non-reducing terminal galactose (Gal) of glycosphingolipids forming gangliosides (important molecules involved in the regulation of multiple cellular processes, including cell proliferation and differentiation, apoptosis, embryogenesis, development, and oncogenesis). Mainly involved in the biosynthesis of ganglioside GM3 but can also use different glycolipids as substrate acceptors such as D-galactosylceramide (GalCer), asialo-GM2 (GA2) and asialo-GM1 (GA1), although less preferentially than beta-D-Gal-(1-&gt;4)-beta-D-Glc-(1&lt;-&gt;1)-Cer (LacCer). The chain is Lactosylceramide alpha-2,3-sialyltransferase (ST3GAL5) from Bos taurus (Bovine).